Here is an 88-residue protein sequence, read N- to C-terminus: Small ribosomal subunit protein bS20 (88 aa).

The disordered stretch occupies residues methionine 1 to asparagine 21.

It belongs to the bacterial ribosomal protein bS20 family.

In terms of biological role, binds directly to 16S ribosomal RNA. In Sinorhizobium fredii (strain NBRC 101917 / NGR234), this protein is Small ribosomal subunit protein bS20.